Reading from the N-terminus, the 145-residue chain is Hemoglobin subunit beta (145 aa).

The region spanning 1–145 is the Globin domain; the sequence is MLTAEEKAAV…VANALAHRYH (145 aa). Thr-11 is modified (phosphothreonine). Phosphoserine is present on Ser-43. N6-acetyllysine is present on Lys-58. His-62 serves as a coordination point for heme b. Position 81 is an N6-acetyllysine (Lys-81). Heme b is bound at residue His-91. Position 92 is an S-nitrosocysteine (Cys-92).

It belongs to the globin family. Heterotetramer of two alpha chains and two beta chains. In terms of tissue distribution, red blood cells.

Functionally, involved in oxygen transport from the lung to the various peripheral tissues. In terms of biological role, functions as an endogenous inhibitor of enkephalin-degrading enzymes such as DPP3, and may thereby play a role as a regulator of pain and inflammation. The polypeptide is Hemoglobin subunit beta (HBB) (Bos taurus (Bovine)).